A 354-amino-acid polypeptide reads, in one-letter code: 3-dehydroquinate synthase (354 aa).

NAD(+) contacts are provided by residues 106 to 110, 130 to 131, Lys-143, and Lys-152; these read GVIGD and TS. Zn(2+) is bound by residues Glu-185, His-246, and His-262.

The protein belongs to the sugar phosphate cyclases superfamily. Dehydroquinate synthase family. The cofactor is Co(2+). Requires Zn(2+) as cofactor. NAD(+) serves as cofactor.

Its subcellular location is the cytoplasm. The catalysed reaction is 7-phospho-2-dehydro-3-deoxy-D-arabino-heptonate = 3-dehydroquinate + phosphate. The protein operates within metabolic intermediate biosynthesis; chorismate biosynthesis; chorismate from D-erythrose 4-phosphate and phosphoenolpyruvate: step 2/7. In terms of biological role, catalyzes the conversion of 3-deoxy-D-arabino-heptulosonate 7-phosphate (DAHP) to dehydroquinate (DHQ). The protein is 3-dehydroquinate synthase of Leuconostoc mesenteroides subsp. mesenteroides (strain ATCC 8293 / DSM 20343 / BCRC 11652 / CCM 1803 / JCM 6124 / NCDO 523 / NBRC 100496 / NCIMB 8023 / NCTC 12954 / NRRL B-1118 / 37Y).